The primary structure comprises 132 residues: Small ribosomal subunit protein uS8 (132 aa).

This sequence belongs to the universal ribosomal protein uS8 family. As to quaternary structure, part of the 30S ribosomal subunit. Contacts proteins S5 and S12.

In terms of biological role, one of the primary rRNA binding proteins, it binds directly to 16S rRNA central domain where it helps coordinate assembly of the platform of the 30S subunit. The chain is Small ribosomal subunit protein uS8 from Sinorhizobium fredii (strain NBRC 101917 / NGR234).